Reading from the N-terminus, the 142-residue chain is MGKTRGMGAGRKLKRLRINQRWADKQYKKSHLGNEWKKPFAGSSHAKGIVLEKIGIEAKQPNSAIRKCARVQLIKNGKKIAAFVPNDGCLNYIEENDEVLIAGFGRKGHAVGDIPGVRFKVVKVSGVSLLALFKEKKEKPRS.

Hydroxyproline is present on P61.

The protein belongs to the universal ribosomal protein uS12 family.

The chain is Small ribosomal subunit protein uS12y (RPS23B) from Arabidopsis thaliana (Mouse-ear cress).